A 179-amino-acid polypeptide reads, in one-letter code: Large ribosomal subunit protein uL5 (179 aa).

This sequence belongs to the universal ribosomal protein uL5 family. As to quaternary structure, part of the 50S ribosomal subunit; part of the 5S rRNA/L5/L18/L25 subcomplex. Contacts the 5S rRNA and the P site tRNA. Forms a bridge to the 30S subunit in the 70S ribosome.

Functionally, this is one of the proteins that bind and probably mediate the attachment of the 5S RNA into the large ribosomal subunit, where it forms part of the central protuberance. In the 70S ribosome it contacts protein S13 of the 30S subunit (bridge B1b), connecting the 2 subunits; this bridge is implicated in subunit movement. Contacts the P site tRNA; the 5S rRNA and some of its associated proteins might help stabilize positioning of ribosome-bound tRNAs. The chain is Large ribosomal subunit protein uL5 from Shewanella putrefaciens (strain CN-32 / ATCC BAA-453).